We begin with the raw amino-acid sequence, 422 residues long: Serine--tRNA ligase (422 aa).

231 to 233 (TSE) serves as a coordination point for L-serine. 262-264 (RQE) serves as a coordination point for ATP. E285 contacts L-serine. ATP is bound at residue 349 to 352 (EISS). S384 serves as a coordination point for L-serine.

The protein belongs to the class-II aminoacyl-tRNA synthetase family. Type-1 seryl-tRNA synthetase subfamily. As to quaternary structure, homodimer. The tRNA molecule binds across the dimer.

The protein localises to the cytoplasm. It carries out the reaction tRNA(Ser) + L-serine + ATP = L-seryl-tRNA(Ser) + AMP + diphosphate + H(+). The catalysed reaction is tRNA(Sec) + L-serine + ATP = L-seryl-tRNA(Sec) + AMP + diphosphate + H(+). The protein operates within aminoacyl-tRNA biosynthesis; selenocysteinyl-tRNA(Sec) biosynthesis; L-seryl-tRNA(Sec) from L-serine and tRNA(Sec): step 1/1. Catalyzes the attachment of serine to tRNA(Ser). Is also able to aminoacylate tRNA(Sec) with serine, to form the misacylated tRNA L-seryl-tRNA(Sec), which will be further converted into selenocysteinyl-tRNA(Sec). This chain is Serine--tRNA ligase, found in Mycoplasma capricolum subsp. capricolum (strain California kid / ATCC 27343 / NCTC 10154).